A 299-amino-acid chain; its full sequence is Urease accessory protein UreD (299 aa).

The protein belongs to the UreD family. In terms of assembly, ureD, UreF and UreG form a complex that acts as a GTP-hydrolysis-dependent molecular chaperone, activating the urease apoprotein by helping to assemble the nickel containing metallocenter of UreC. The UreE protein probably delivers the nickel.

It is found in the cytoplasm. Required for maturation of urease via the functional incorporation of the urease nickel metallocenter. The polypeptide is Urease accessory protein UreD (Natronomonas pharaonis (strain ATCC 35678 / DSM 2160 / CIP 103997 / JCM 8858 / NBRC 14720 / NCIMB 2260 / Gabara) (Halobacterium pharaonis)).